Consider the following 726-residue polypeptide: Bromodomain-containing protein 3 (726 aa).

A disordered region spans residues methionine 1–lysine 35. Serine 2 carries the post-translational modification N-acetylserine. Positions threonine 15–valine 26 are enriched in pro residues. Positions arginine 34 to methionine 140 constitute a Bromo 1 domain. An acetylated histone H3 binding region spans residues lysine 78–proline 80. Disordered regions lie at residues proline 149–glutamine 169 and valine 237–lysine 305. Low complexity predominate over residues threonine 248–serine 261. 2 positions are modified to phosphoserine: serine 263 and serine 281. Residues glycine 306–methionine 415 form the Bromo 2 domain. Lysine 414 participates in a covalent cross-link: Glycyl lysine isopeptide (Lys-Gly) (interchain with G-Cter in SUMO2). Disordered regions lie at residues glutamate 421–arginine 462, leucine 477–aspartate 575, and leucine 637–glutamate 726. The stretch at serine 453 to alanine 524 forms a coiled coil. The segment covering lysine 487–aspartate 503 has biased composition (basic residues). Positions lysine 504–alanine 521 are enriched in basic and acidic residues. Over residues valine 523–alanine 540 the composition is skewed to low complexity. The NET domain occupies aspartate 562–proline 644. Phosphoserine is present on serine 563. A coiled-coil region spans residues phenylalanine 645 to lysine 684. A compositionally biased stretch (basic and acidic residues) spans lysine 655–glutamine 673. Low complexity predominate over residues glycine 692–glutamate 726.

Belongs to the BET family. As to quaternary structure, interacts (via bromo domain 1) with GATA1 acetylated at 'Lys-312' and 'Lys-315'. Interacts (via bromo domain 1) with GATA2 acetylated on lysine residues. Interacts (via NET domain) with CHD4 (via KIKL motif). Interacts (via NET domain) with SMARCA4 (via KIKL motif). Interacts (via NET domain) with NSD3 (via KIKL motif). (Microbial infection) Interacts with the Integrase protein of Moloney murine leukemia virus (MLV). In terms of tissue distribution, ubiquitous.

It localises to the nucleus. The protein localises to the chromosome. Its activity is regulated as follows. Inhibited by JQ1, a thieno-triazolo-1,4-diazepine derivative, which specifically inhibits members of the BET family (BRD2, BRD3 and BRD4). The first bromo domain is inhibited by GSK778 (iBET-BD1), which specifically inhibits the first bromo domain of members of the BET family (BRD2, BRD3 and BRD4). The second bromo domain is inhibited by ABBV-744, which specifically inhibits the second bromo domain of members of the BET family (BRD2, BRD3 and BRD4). The second bromo domain is inhibited by GSK046 (iBET-BD2), which specifically inhibits the second bromo domain of members of the BET family (BRD2, BRD3 and BRD4). In terms of biological role, chromatin reader that recognizes and binds acetylated histones, thereby controlling gene expression and remodeling chromatin structures. Recruits transcription factors and coactivators to target gene sites, and activates RNA polymerase II machinery for transcriptional elongation. In vitro, binds acetylated lysine residues on the N-terminus of histone H2A, H2B, H3 and H4. Involved in endoderm differentiation via its association with long non-coding RNA (lncRNA) DIGIT: BRD3 undergoes liquid-liquid phase separation upon binding to lncRNA DIGIT, promoting binding to histone H3 acetylated at 'Lys-18' (H3K18ac) to induce endoderm gene expression. Also binds non-histones acetylated proteins, such as GATA1 and GATA2: regulates transcription by promoting the binding of the transcription factor GATA1 to its targets. In Homo sapiens (Human), this protein is Bromodomain-containing protein 3.